Here is a 154-residue protein sequence, read N- to C-terminus: Transcriptional repressor NrdR (154 aa).

Residues 3 to 34 fold into a zinc finger; sequence CPFCGANDTKVIDSRLVAEGEQVRRRRECLAC. An ATP-cone domain is found at 49–139; it reads PRLIKTDGSR…VYRRFQDLNE (91 aa).

Belongs to the NrdR family. Requires Zn(2+) as cofactor.

Negatively regulates transcription of bacterial ribonucleotide reductase nrd genes and operons by binding to NrdR-boxes. This Pseudomonas fluorescens (strain Pf0-1) protein is Transcriptional repressor NrdR.